A 144-amino-acid chain; its full sequence is Maximins 8/H7 (144 aa).

The first 18 residues, 1–18, serve as a signal peptide directing secretion; that stretch reads MKFKYIVAVSFLIASAYA. The propeptide occupies 19–43; the sequence is RSEENDEQSLSQRDVLEEESLREIR. Asn70 is modified (asparagine amide). Positions 74–123 are excised as a propeptide; it reads TAEDHEVMKRLEAVMRDLDSLDYPEEASERETRGFNQEEIANLFTKKEKR. Residue Leu143 is modified to Leucine amide.

Belongs to the bombinin family. In terms of tissue distribution, expressed by the skin glands.

The protein localises to the secreted. Functionally, maximin-8 shows antimicrobial activity against bacteria and against the fungus C.albicans. It has little hemolytic activity. In terms of biological role, maximin-H7 shows antimicrobial activity against bacteria and against the fungus C.albicans. Shows strong hemolytic activity. The protein is Maximins 8/H7 of Bombina maxima (Giant fire-bellied toad).